A 618-amino-acid polypeptide reads, in one-letter code: D-glucuronyl C5-epimerase (618 aa).

Residues 1–11 (MRCLAARVNYK) lie on the Cytoplasmic side of the membrane. Residues 12 to 29 (TLIIICALFTLVTVLLWN) form a helical; Signal-anchor for type II membrane protein membrane-spanning segment. At 30–618 (KCSSDKAIQF…YLKGSRAKHN (589 aa)) the chain is on the lumenal side. Substrate-binding positions include Tyr-180, 185–187 (RDR), Gln-202, Tyr-210, Gln-213, and Gln-216. Residues Thr-238, Glu-240, Thr-269, Asn-270, and Asp-393 each contribute to the Ca(2+) site. Substrate is bound by residues 430–433 (KLGE), 500–501 (EY), Asn-511, Tyr-515, Tyr-561, Arg-564, and 573–582 (NLARWDYHTT).

Belongs to the D-glucuronyl C5-epimerase family. As to quaternary structure, homodimer. Interacts with HS2ST1. As to expression, widely expressed with highest levels in lung and lowest levels in spleen.

It is found in the golgi apparatus membrane. It catalyses the reaction [heparosan-N-sulfate](n) = [heparan-N-sulfate](n). It functions in the pathway glycan metabolism; heparan sulfate biosynthesis. It participates in glycan metabolism; heparin biosynthesis. Functionally, converts D-glucuronic acid residues adjacent to N-sulfate sugar residues to L-iduronic acid residues, both in maturing heparan sulfate (HS) and heparin chains. This is important for further modifications that determine the specificity of interactions between these glycosaminoglycans and proteins. This chain is D-glucuronyl C5-epimerase (Glce), found in Mus musculus (Mouse).